The chain runs to 138 residues: Histone H2B.8 (138 aa).

The segment covering 1–38 (MAPKAAEKKPAGKKPAEKAPAEKLPKAEKKITKEGGSE) has biased composition (basic and acidic residues). A disordered region spans residues 1-45 (MAPKAAEKKPAGKKPAEKAPAEKLPKAEKKITKEGGSEKKKKKSK). A N,N,N-trimethylalanine; alternate modification is found at Ala-2. Ala-2 bears the N,N-dimethylalanine; alternate mark. Position 2 is an N-methylalanine; alternate (Ala-2). Lys-4 is subject to N6-methyllysine. N6-acetyllysine is present on residues Lys-8 and Lys-13. Lys-14 is subject to N6,N6-dimethyllysine. Lys-18, Lys-23, Lys-29, and Lys-30 each carry N6-acetyllysine. Residue Lys-134 forms a Glycyl lysine isopeptide (Lys-Gly) (interchain with G-Cter in ubiquitin) linkage.

This sequence belongs to the histone H2B family. In terms of assembly, the nucleosome is a histone octamer containing two molecules each of H2A, H2B, H3 and H4 assembled in one H3-H4 heterotetramer and two H2A-H2B heterodimers. The octamer wraps approximately 147 bp of DNA. Post-translationally, can be acetylated to form H2BK6ac, H2BK33ac and H2BK34ac. In terms of processing, monoubiquitinated by BRE1 to form H2BK143ub1 and deubiquitinated by UBP26. Required for heterochromatic histone H3 di- and trimethylation at H3K4me. May give a specific tag for epigenetic transcriptional activation.

Its subcellular location is the nucleus. It is found in the chromosome. In terms of biological role, core component of nucleosome. Nucleosomes wrap and compact DNA into chromatin, limiting DNA accessibility to the cellular machineries which require DNA as a template. Histones thereby play a central role in transcription regulation, DNA repair, DNA replication and chromosomal stability. DNA accessibility is regulated via a complex set of post-translational modifications of histones, also called histone code, and nucleosome remodeling. The chain is Histone H2B.8 from Arabidopsis thaliana (Mouse-ear cress).